Consider the following 214-residue polypeptide: Ribonuclease HII (214 aa).

Positions 27–214 (SVVAGIDEAG…SPIKQMCAIV (188 aa)) constitute an RNase H type-2 domain. A divalent metal cation-binding residues include aspartate 33, glutamate 34, and aspartate 126.

It belongs to the RNase HII family. The cofactor is Mn(2+). It depends on Mg(2+) as a cofactor.

It localises to the cytoplasm. The enzyme catalyses Endonucleolytic cleavage to 5'-phosphomonoester.. Endonuclease that specifically degrades the RNA of RNA-DNA hybrids. The protein is Ribonuclease HII (rnhB) of Chlamydia pneumoniae (Chlamydophila pneumoniae).